A 115-amino-acid chain; its full sequence is CRISPR-associated endoribonuclease Cas2 (115 aa).

Aspartate 22 contributes to the Mg(2+) binding site.

It belongs to the CRISPR-associated endoribonuclease Cas2 protein family. As to quaternary structure, homodimer, forms a heterotetramer with a Cas1 homodimer. Requires Mg(2+) as cofactor.

In terms of biological role, CRISPR (clustered regularly interspaced short palindromic repeat), is an adaptive immune system that provides protection against mobile genetic elements (viruses, transposable elements and conjugative plasmids). CRISPR clusters contain sequences complementary to antecedent mobile elements and target invading nucleic acids. CRISPR clusters are transcribed and processed into CRISPR RNA (crRNA). Functions as a ssRNA-specific endoribonuclease. Involved in the integration of spacer DNA into the CRISPR cassette. This chain is CRISPR-associated endoribonuclease Cas2, found in Flavobacterium psychrophilum (strain ATCC 49511 / DSM 21280 / CIP 103535 / JIP02/86).